Reading from the N-terminus, the 266-residue chain is MSLISADNIVKIYQSHSLVGASARKTVLHDISISIGQGETVALLGRSGCGKSTLARLLVGLERPTSGEVRFRGVPLTKLDRSGMKAFRREVQLIFQDSPGAVNARSSVRAIIGEPLRHLTSLDETRREERIQELLRLVELPPEIADRLPAQVSGGQLQRICIARALAVNPKLIILDEAVSNLDIHLQASALALLTKLQQEGGIAYLFVTHDLRLVQKFAARCLVMDEGQIVEEIKTADLDSMRHPASRLLREAVLPPLPVRAVETN.

In terms of domain architecture, ABC transporter spans 4 to 252 (ISADNIVKIY…RHPASRLLRE (249 aa)). Residue 45 to 52 (GRSGCGKS) participates in ATP binding.

The protein belongs to the ABC transporter superfamily. Nickel importer (TC 3.A.1.5.3) family. As to quaternary structure, the complex is composed of two ATP-binding proteins (NikD and NikE), two transmembrane proteins (NikB and NikC) and a solute-binding protein (NikA).

The protein localises to the cell inner membrane. It carries out the reaction Ni(2+)(out) + ATP + H2O = Ni(2+)(in) + ADP + phosphate + H(+). Functionally, part of the ABC transporter complex NikABCDE involved in nickel import. Responsible for energy coupling to the transport system. In Brucella suis biovar 1 (strain 1330), this protein is Nickel import ATP-binding protein NikE.